We begin with the raw amino-acid sequence, 395 residues long: Elongation factor Tu (395 aa).

Residues 10 to 204 form the tr-type G domain; it reads KPHLNIGTIG…TVDNYIKEPI (195 aa). The interval 19-26 is G1; sequence GHVDHGKT. Position 19-26 (19-26) interacts with GTP; sequence GHVDHGKT. A Mg(2+)-binding site is contributed by threonine 26. A G2 region spans residues 60 to 64; that stretch reads GITIN. The G3 stretch occupies residues 81–84; sequence DCPG. GTP contacts are provided by residues 81 to 85 and 136 to 139; these read DCPGH and NKVD. The interval 136 to 139 is G4; the sequence is NKVD. The interval 174-176 is G5; sequence SAL.

Belongs to the TRAFAC class translation factor GTPase superfamily. Classic translation factor GTPase family. EF-Tu/EF-1A subfamily. In terms of assembly, monomer.

It localises to the cytoplasm. It carries out the reaction GTP + H2O = GDP + phosphate + H(+). Its function is as follows. GTP hydrolase that promotes the GTP-dependent binding of aminoacyl-tRNA to the A-site of ribosomes during protein biosynthesis. The sequence is that of Elongation factor Tu from Karelsulcia muelleri (strain GWSS) (Sulcia muelleri).